The chain runs to 326 residues: Protein BugT (326 aa).

The N-terminal stretch at 1-25 is a signal peptide; that stretch reads MNMTRLLAVIGIFIATAGIAAPVSA.

This sequence belongs to the UPF0065 (bug) family.

The protein resides in the periplasm. The chain is Protein BugT (bugT) from Bordetella pertussis (strain Tohama I / ATCC BAA-589 / NCTC 13251).